A 161-amino-acid polypeptide reads, in one-letter code: DNA-directed RNA polymerase 18 kDa subunit (161 aa).

This sequence belongs to the poxviridae DNA-directed RNA polymerase 18 kDa subunit family. The DNA-dependent RNA polymerase used for intermediate and late genes expression consists of eight subunits Rpo30/OPG66, Rpo7/OPG90, Rpo22/OPG103, Rpo147/OPG105, Rpo18/OPG119, Rpo19/OPG131, Rpo132/OPG151 and Rpo35/OPG156. The same holoenzyme, with the addition of the transcription-specificity factor OPG109, is used for early gene expression. Post-translationally, apparently non-glycosylated.

It localises to the virion. The catalysed reaction is RNA(n) + a ribonucleoside 5'-triphosphate = RNA(n+1) + diphosphate. Part of the DNA-dependent RNA polymerase which catalyzes the transcription of viral DNA into RNA using the four ribonucleoside triphosphates as substrates. Responsible for the transcription of early, intermediate and late genes. DNA-dependent RNA polymerase associates with the early transcription factor (ETF), itself composed of OPG118 and OPG133, thereby allowing the early genes transcription. Late transcription, and probably also intermediate transcription, require newly synthesized RNA polymerase. The protein is DNA-directed RNA polymerase 18 kDa subunit (OPG119) of Cynomys gunnisoni (Gunnison's prairie dog).